We begin with the raw amino-acid sequence, 323 residues long: Putative divalent cation/proton antiporter TMEM165 (323 aa).

An N-terminal signal peptide occupies residues 1 to 33 (MAASARGSGRAPTRRLLVLLLLPLLWAPAGVRA). The Lumenal portion of the chain corresponds to 34 to 88 (GPEEDLSHRNQEPPAPAQQLQPQPAAVQGLEPARAEKGFTPAAPVHTNREDAATQ). Positions 35–44 (PEEDLSHRNQ) are enriched in basic and acidic residues. The interval 35-60 (PEEDLSHRNQEPPAPAQQLQPQPAAV) is disordered. Residues 50-59 (AQQLQPQPAA) show a composition bias toward low complexity. The chain crosses the membrane as a helical span at residues 89 to 109 (ANLGFIHAFVAAISVIIVSEL). The Cytoplasmic segment spans residues 110-126 (GDKTFFIAAIMAMRYNR). The chain crosses the membrane as a helical span at residues 127-147 (LTVLAGAMLALALMTCLSVLF). Residues 148–151 (GYAT) lie on the Lumenal side of the membrane. Residues 152–172 (TVIPRVYTYYVSTALFAIFGI) traverse the membrane as a helical segment. Residues 173–227 (RMLREGLKMSPDEGQEELEEVQAELKKKDEEFQRTKLLNGPDVETGTSTAIPQKK) are Cytoplasmic-facing. Residues 184 to 211 (DEGQEELEEVQAELKKKDEEFQRTKLLN) are a coiled coil. Residues 228–248 (WLHFISPIFVQALTLTFLAEW) traverse the membrane as a helical segment. The Lumenal portion of the chain corresponds to 249-266 (GDRSQLTTIVLAAREDPY). A helical transmembrane segment spans residues 267-287 (GVAVGGTVGHCLCTGLAVIGG). At 288-298 (RMIAQKISVRT) the chain is on the cytoplasmic side. A helical membrane pass occupies residues 299–319 (VTIIGGIVFLAFAFSALFISP). At 320 to 323 (ESGF) the chain is on the lumenal side.

It belongs to the GDT1 family.

It is found in the golgi apparatus membrane. The enzyme catalyses Ca(2+)(in) + n H(+)(out) = Ca(2+)(out) + n H(+)(in). The catalysed reaction is Mn(2+)(in) + n H(+)(out) = Mn(2+)(out) + n H(+)(in). In terms of biological role, putative divalent cation:proton antiporter that exchanges calcium or manganese ions for protons across the Golgi membrane. Mediates the reversible transport of calcium or manganese to the Golgi lumen driven by the proton gradient and possibly the membrane potential generated by V-ATPase. Provides calcium or manganese cofactors to resident Golgi enzymes and contributes to the maintenance of an acidic luminal Golgi pH required for proper functioning of the secretory pathway. Promotes Ca(2+) storage within the Golgi lumen of the mammary epithelial cells to be then secreted into milk. The transport mechanism and stoichiometry remains to be elucidated. The protein is Putative divalent cation/proton antiporter TMEM165 of Rattus norvegicus (Rat).